Here is a 313-residue protein sequence, read N- to C-terminus: Tetraspanning orphan receptor (313 aa).

Residues 1–54 (PQCESETNFHYDIPPGYKDDVLVDVNNMSPSLVSDTQKHERGSHEVKIKHFSPY) are Extracellular-facing. Residues 55–75 (IAVCVTTFSLAFCCFMVHAAI) traverse the membrane as a helical segment. Residues 76–82 (TRQPTHL) lie on the Cytoplasmic side of the membrane. The chain crosses the membrane as a helical span at residues 83–103 (LPFFFIQVFDLIICLIHILGF). Topologically, residues 104–129 (MSSTSDIRLVIHTKTGPIYIKSTGLT) are extracellular. Residues 130-150 (FIILSISCMMLAFKAYCLGMV) form a helical membrane-spanning segment. The Cytoplasmic portion of the chain corresponds to 151 to 313 (WDCYKYLMLN…NASSNAHSSC (163 aa)). Disordered stretches follow at residues 192–218 (NNSI…YDPA) and 279–313 (NTNT…HSSC). Residues 279–295 (NTNTSTTTSVISPLTTT) show a composition bias toward low complexity. Residues 301–313 (QINNASSNAHSSC) are compositionally biased toward polar residues.

As to quaternary structure, interacts (via N-terminal extracellular domain) with human C2a. Phosphorylated on tyrosine residues.

It localises to the cell membrane. In terms of biological role, cell surface receptor that binds to human complement C2a protein. This results in inhibition of the classical and lectin pathways of complement activation, probably due to interference with binding of C2a to C4b and interference with cleavage by C1 or MASP2 such that C3 convertase cannot be formed. This infers resistance to complement-mediated cell lysis, allowing parasite survival and infection. The sequence is that of Tetraspanning orphan receptor from Schistosoma haematobium (Blood fluke).